The chain runs to 700 residues: Elongation factor G (700 aa).

Residues 13-288 (SKIRNIGITA…AVIDYLPAPD (276 aa)) form the tr-type G domain. GTP-binding positions include 22 to 29 (AHIDAGKT), 86 to 90 (DTPGH), and 140 to 143 (NKLD).

Belongs to the TRAFAC class translation factor GTPase superfamily. Classic translation factor GTPase family. EF-G/EF-2 subfamily.

It is found in the cytoplasm. Catalyzes the GTP-dependent ribosomal translocation step during translation elongation. During this step, the ribosome changes from the pre-translocational (PRE) to the post-translocational (POST) state as the newly formed A-site-bound peptidyl-tRNA and P-site-bound deacylated tRNA move to the P and E sites, respectively. Catalyzes the coordinated movement of the two tRNA molecules, the mRNA and conformational changes in the ribosome. The protein is Elongation factor G of Gluconobacter oxydans (strain 621H) (Gluconobacter suboxydans).